Reading from the N-terminus, the 316-residue chain is Very-long-chain 3-oxooacyl-coA reductase let-767 (316 aa).

Residues 47–76 and aspartate 106 each bind NADP(+); that span reads ASWAVVTGATDGIGKAYAFELARRGFNVLL. Serine 189 is a binding site for substrate. Tyrosine 202 serves as the catalytic Proton acceptor. NADP(+) is bound at residue lysine 206.

Belongs to the short-chain dehydrogenases/reductases (SDR) family. 17-beta-HSD 3 subfamily. Expressed in the gut of larva and adult.

The enzyme catalyses a very-long-chain (3R)-3-hydroxyacyl-CoA + NADP(+) = a very-long-chain 3-oxoacyl-CoA + NADPH + H(+). It catalyses the reaction (omega-1)-methyl-(3R)-hydroxy-fatty acyl-CoA + NADP(+) = (omega-1)-methyl-3-oxo-fatty acyl-CoA + NADPH + H(+). It carries out the reaction a 17beta-hydroxy steroid + NADP(+) = a 17-oxo steroid + NADPH + H(+). Its pathway is lipid metabolism; fatty acid biosynthesis. Functionally, required for branched-chain fatty acid synthesis (such as (omega-1)-methyl-fatty acids). Catalyzes the reduction of the 3-keto-fatty acyl-CoA intermediate that is formed in each cycle of fatty acid elongation. Very long-chain fatty acids (VLCFAs) serve as precursors for ceramide and sphingolipids. Involved in hormone production as it metabolizes 4-androstendione (androst-4-ene-3,17-dione) into testosterone and estrone into estradiol (17beta-estradiol) in vitro, but the physiological steroid substrate is unknown. This chain is Very-long-chain 3-oxooacyl-coA reductase let-767 (let-767), found in Caenorhabditis elegans.